The following is a 288-amino-acid chain: 4-hydroxybenzoate octaprenyltransferase (288 aa).

Helical transmembrane passes span 23 to 43, 46 to 66, 98 to 118, 141 to 161, 163 to 183, 213 to 233, 234 to 254, and 268 to 288; these read IGSL…GRGI, AKIL…GCVV, ILFV…NSMT, LPQV…FAAV, ESLP…TVAY, LIIG…GWLM, NLGG…THQQ, and AFLN…ISYW.

Belongs to the UbiA prenyltransferase family. Mg(2+) is required as a cofactor.

It localises to the cell inner membrane. The enzyme catalyses all-trans-octaprenyl diphosphate + 4-hydroxybenzoate = 4-hydroxy-3-(all-trans-octaprenyl)benzoate + diphosphate. It functions in the pathway cofactor biosynthesis; ubiquinone biosynthesis. Functionally, catalyzes the prenylation of para-hydroxybenzoate (PHB) with an all-trans polyprenyl group. Mediates the second step in the final reaction sequence of ubiquinone-8 (UQ-8) biosynthesis, which is the condensation of the polyisoprenoid side chain with PHB, generating the first membrane-bound Q intermediate 3-octaprenyl-4-hydroxybenzoate. The polypeptide is 4-hydroxybenzoate octaprenyltransferase (Yersinia pseudotuberculosis serotype IB (strain PB1/+)).